Here is a 453-residue protein sequence, read N- to C-terminus: Bifunctional protein GlmU (453 aa).

The segment at 1–226 is pyrophosphorylase; the sequence is MLDILILAAG…IQEVEGINNR (226 aa). Residues 7-10, Lys21, Gln72, 77-78, 99-101, Gly136, Glu151, Asn166, and Asn224 each bind UDP-N-acetyl-alpha-D-glucosamine; these read LAAG, GT, and YGD. Residue Asp101 participates in Mg(2+) binding. Mg(2+) is bound at residue Asn224. Residues 227 to 247 form a linker region; it reads QQQATLERYYQQQQARALMDA. The N-acetyltransferase stretch occupies residues 248–453; it reads GVTLLDPARF…QGWERPTRKS (206 aa). Residues Arg330 and Lys348 each coordinate UDP-N-acetyl-alpha-D-glucosamine. His360 serves as the catalytic Proton acceptor. Residues Tyr363 and Asn374 each coordinate UDP-N-acetyl-alpha-D-glucosamine. Acetyl-CoA-binding positions include Ala377, 383 to 384, Ser402, Ala420, and Arg437; that span reads NY.

It in the N-terminal section; belongs to the N-acetylglucosamine-1-phosphate uridyltransferase family. In the C-terminal section; belongs to the transferase hexapeptide repeat family. As to quaternary structure, homotrimer. Requires Mg(2+) as cofactor.

The protein localises to the cytoplasm. The enzyme catalyses alpha-D-glucosamine 1-phosphate + acetyl-CoA = N-acetyl-alpha-D-glucosamine 1-phosphate + CoA + H(+). It catalyses the reaction N-acetyl-alpha-D-glucosamine 1-phosphate + UTP + H(+) = UDP-N-acetyl-alpha-D-glucosamine + diphosphate. It functions in the pathway nucleotide-sugar biosynthesis; UDP-N-acetyl-alpha-D-glucosamine biosynthesis; N-acetyl-alpha-D-glucosamine 1-phosphate from alpha-D-glucosamine 6-phosphate (route II): step 2/2. It participates in nucleotide-sugar biosynthesis; UDP-N-acetyl-alpha-D-glucosamine biosynthesis; UDP-N-acetyl-alpha-D-glucosamine from N-acetyl-alpha-D-glucosamine 1-phosphate: step 1/1. The protein operates within bacterial outer membrane biogenesis; LPS lipid A biosynthesis. In terms of biological role, catalyzes the last two sequential reactions in the de novo biosynthetic pathway for UDP-N-acetylglucosamine (UDP-GlcNAc). The C-terminal domain catalyzes the transfer of acetyl group from acetyl coenzyme A to glucosamine-1-phosphate (GlcN-1-P) to produce N-acetylglucosamine-1-phosphate (GlcNAc-1-P), which is converted into UDP-GlcNAc by the transfer of uridine 5-monophosphate (from uridine 5-triphosphate), a reaction catalyzed by the N-terminal domain. The polypeptide is Bifunctional protein GlmU (Cellvibrio japonicus (strain Ueda107) (Pseudomonas fluorescens subsp. cellulosa)).